The primary structure comprises 357 residues: Chorismate synthase (357 aa).

Residues 38 to 49 show a composition bias toward basic and acidic residues; sequence EKDIQPDLDRRK. The interval 38-60 is disordered; that stretch reads EKDIQPDLDRRKPGTSRYTTPRR. Residues arginine 48 and arginine 54 each coordinate NADP(+). Residues 125 to 127, 243 to 244, glycine 283, 298 to 302, and arginine 324 each bind FMN; these read RSS, NA, and KPTSS.

Belongs to the chorismate synthase family. Homotetramer. FMNH2 is required as a cofactor.

The enzyme catalyses 5-O-(1-carboxyvinyl)-3-phosphoshikimate = chorismate + phosphate. Its pathway is metabolic intermediate biosynthesis; chorismate biosynthesis; chorismate from D-erythrose 4-phosphate and phosphoenolpyruvate: step 7/7. In terms of biological role, catalyzes the anti-1,4-elimination of the C-3 phosphate and the C-6 proR hydrogen from 5-enolpyruvylshikimate-3-phosphate (EPSP) to yield chorismate, which is the branch point compound that serves as the starting substrate for the three terminal pathways of aromatic amino acid biosynthesis. This reaction introduces a second double bond into the aromatic ring system. The sequence is that of Chorismate synthase from Haemophilus influenzae (strain PittEE).